The primary structure comprises 242 residues: Alpha-aspartyl dipeptidase (242 aa).

Catalysis depends on charge relay system residues S125, D140, and H162.

It belongs to the peptidase S51 family.

The protein localises to the cytoplasm. The enzyme catalyses Dipeptidase E catalyzes the hydrolysis of dipeptides Asp-|-Xaa. It does not act on peptides with N-terminal Glu, Asn or Gln, nor does it cleave isoaspartyl peptides.. Its function is as follows. Hydrolyzes dipeptides containing N-terminal aspartate residues. The sequence is that of Alpha-aspartyl dipeptidase (aad-a) from Xenopus laevis (African clawed frog).